A 258-amino-acid polypeptide reads, in one-letter code: Tryptophan synthase alpha chain (258 aa).

Catalysis depends on proton acceptor residues Glu-52 and Asp-63.

The protein belongs to the TrpA family. Tetramer of two alpha and two beta chains.

It carries out the reaction (1S,2R)-1-C-(indol-3-yl)glycerol 3-phosphate + L-serine = D-glyceraldehyde 3-phosphate + L-tryptophan + H2O. It functions in the pathway amino-acid biosynthesis; L-tryptophan biosynthesis; L-tryptophan from chorismate: step 5/5. In terms of biological role, the alpha subunit is responsible for the aldol cleavage of indoleglycerol phosphate to indole and glyceraldehyde 3-phosphate. The polypeptide is Tryptophan synthase alpha chain (Streptococcus pneumoniae (strain P1031)).